Consider the following 1279-residue polypeptide: ATP-dependent helicase/nuclease subunit A (1279 aa).

Residues 4-499 (TKWTDEQRQA…VKLFKNFRSR (496 aa)) form the UvrD-like helicase ATP-binding domain. Residue 25–32 (AGAGAGKT) coordinates ATP. Residues 526 to 853 (EEALKVGASY…RIMSIHKSKG (328 aa)) form the UvrD-like helicase C-terminal domain.

Belongs to the helicase family. AddA subfamily. Heterodimer of AddA and AddB/RexB. Mg(2+) serves as cofactor.

It catalyses the reaction Couples ATP hydrolysis with the unwinding of duplex DNA by translocating in the 3'-5' direction.. The catalysed reaction is ATP + H2O = ADP + phosphate + H(+). Its function is as follows. The heterodimer acts as both an ATP-dependent DNA helicase and an ATP-dependent, dual-direction single-stranded exonuclease. Recognizes the chi site generating a DNA molecule suitable for the initiation of homologous recombination. The AddA nuclease domain is required for chi fragment generation; this subunit has the helicase and 3' -&gt; 5' nuclease activities. The polypeptide is ATP-dependent helicase/nuclease subunit A (Clostridium botulinum (strain Kyoto / Type A2)).